We begin with the raw amino-acid sequence, 88 residues long: Cell division topological specificity factor (88 aa).

The protein belongs to the MinE family.

Prevents the cell division inhibition by proteins MinC and MinD at internal division sites while permitting inhibition at polar sites. This ensures cell division at the proper site by restricting the formation of a division septum at the midpoint of the long axis of the cell. The protein is Cell division topological specificity factor of Citrobacter koseri (strain ATCC BAA-895 / CDC 4225-83 / SGSC4696).